The sequence spans 431 residues: O-Mevalon transferase macI (431 aa).

N176 is a glycosylation site (N-linked (GlcNAc...) asparagine). 4 helical membrane passes run 198-218 (IYALIVCGFAITIYSHFAILM), 301-321 (LLMMSFVISGLIHACGTYQVT), 336-356 (YFALQGMAIIAEDFGCWVLGI), and 404-424 (LFAALELVRVSAVAVPGNFVA).

Belongs to the wax synthase family.

The protein resides in the membrane. It functions in the pathway secondary metabolite biosynthesis; terpenoid biosynthesis. In terms of biological role, O-Mevalon transferase; part of the gene cluster that mediates the biosynthesis of macrophorins, isoprenoid epoxycyclohexenones containing cyclized drimane moieties. The first step of the pathway is the synthesis of 6-methylsalicylic acid (6-MSA) by the polyketide synthase macA. 6-MSA is then converted to m-cresol by the decarboxylase macB. The cytochrome P450 monooxygenase macC then catalyzes the oxidation of m-cresol to toluquinol. Epoxidation of toluquinol is then performed by the short chain dehydrogenase macD, with the help of macE, and a further prenylation by macG leads to 7-deacetoxyyanuthone A. The next step is the hydroxylation of C-22 of 7-deacetoxyyanuthone A by the cytochrome P450 monooxygenase macH to yield 22-deacetylyanuthone A. O-Mevalon transferase macI then attaches mevalon to the hydroxyl group of 22-deacetylyanuthone A to produce yanuthone E. The terpene cyclase macJ catalyzes the cyclization of 22-deacetylyanuthone A to macrophorin A. MacJ is also able to catalyze cyclization of yanuthone E and 7-deacetoxyyanuthone A to their corresponding macrophorins. The macJ products can be further modified by macH and macJ, as well as by the FAD-dependent monooxygenase macF, to produce additional macrophorins, including 4'-oxomacrophorin A, 4'-oxomacrophorin D and 4'-oxomacrophorin E. The chain is O-Mevalon transferase macI from Penicillium terrestre.